The following is a 142-amino-acid chain: Transcription antitermination protein NusB (142 aa).

Belongs to the NusB family.

Functionally, involved in transcription antitermination. Required for transcription of ribosomal RNA (rRNA) genes. Binds specifically to the boxA antiterminator sequence of the ribosomal RNA (rrn) operons. The chain is Transcription antitermination protein NusB from Borrelia garinii subsp. bavariensis (strain ATCC BAA-2496 / DSM 23469 / PBi) (Borreliella bavariensis).